A 257-amino-acid chain; its full sequence is 3-deoxy-manno-octulosonate cytidylyltransferase (257 aa).

The protein belongs to the KdsB family.

The protein localises to the cytoplasm. It carries out the reaction 3-deoxy-alpha-D-manno-oct-2-ulosonate + CTP = CMP-3-deoxy-beta-D-manno-octulosonate + diphosphate. The protein operates within nucleotide-sugar biosynthesis; CMP-3-deoxy-D-manno-octulosonate biosynthesis; CMP-3-deoxy-D-manno-octulosonate from 3-deoxy-D-manno-octulosonate and CTP: step 1/1. It participates in bacterial outer membrane biogenesis; lipopolysaccharide biosynthesis. Functionally, activates KDO (a required 8-carbon sugar) for incorporation into bacterial lipopolysaccharide in Gram-negative bacteria. This chain is 3-deoxy-manno-octulosonate cytidylyltransferase, found in Albidiferax ferrireducens (strain ATCC BAA-621 / DSM 15236 / T118) (Rhodoferax ferrireducens).